Reading from the N-terminus, the 325-residue chain is Cytochrome c biogenesis protein CcsA (325 aa).

8 consecutive transmembrane segments (helical) span residues 12 to 32, 45 to 65, 72 to 92, 100 to 120, 145 to 165, 231 to 251, 264 to 281, and 293 to 313; these read HISFSVVSILISIHLITLLFV, GMIITFFCITGLLVTRWVFSG, LYESLIFLSWTFSIFYMVPYF, LNTIITPSVIFTQGFATSGLL, MILGYATLLCGSLLSVAILVI, TISLGFIFLTIGIISGAVWAN, ETWAFITWTIFAIYLHTR, and IVASIGFLIIWVCYLGINLLG.

The protein belongs to the CcmF/CycK/Ccl1/NrfE/CcsA family. In terms of assembly, may interact with Ccs1.

Its subcellular location is the plastid. The protein localises to the chloroplast thylakoid membrane. Required during biogenesis of c-type cytochromes (cytochrome c6 and cytochrome f) at the step of heme attachment. This chain is Cytochrome c biogenesis protein CcsA, found in Glycine max (Soybean).